Consider the following 177-residue polypeptide: TRAF-interacting protein with FHA domain-containing protein A (177 aa).

One can recognise an FHA domain in the interval 48 to 104 (VAFGRDYNVCRYPLLSNRVSRIQFNLQFFKHFNCSTTAIEIKNLSKKNKLYVDNLEL).

This sequence belongs to the TIFA family. In terms of assembly, interacts with traf6.

Its subcellular location is the cytoplasm. In terms of biological role, adapter molecule that plays a key role in the activation of pro-inflammatory NF-kappa-B signaling following detection of bacterial pathogen-associated molecular pattern metabolites (PAMPs). Promotes activation of an innate immune response by inducing the oligomerization and polyubiquitination of TRAF6, which leads to the activation of TAK1 and IKK through a proteasome-independent mechanism. The protein is TRAF-interacting protein with FHA domain-containing protein A of Xenopus tropicalis (Western clawed frog).